Reading from the N-terminus, the 40-residue chain is Large ribosomal subunit protein bL36 (40 aa).

Belongs to the bacterial ribosomal protein bL36 family.

This chain is Large ribosomal subunit protein bL36, found in Corynebacterium jeikeium (strain K411).